The primary structure comprises 95 residues: Probable FAD-linked sulfhydryl oxidase OPG072 (95 aa).

Over 1-8 (MNPKHWGR) the chain is Intravirion. Residues 1-95 (MNPKHWGRAV…AIDVSKVKPL (95 aa)) enclose the ERV/ALR sulfhydryl oxidase domain. Residues 9 to 25 (AVWTIIFIVLSQAGLDG) form a helical membrane-spanning segment. The Virion surface portion of the chain corresponds to 26 to 95 (NIEACKRKLY…AIDVSKVKPL (70 aa)). Cys-43 and Cys-46 are disulfide-bonded.

It belongs to the orthopoxvirus OPG072 family. Interacts with OPG128; this interaction involves formation of a transient disulfide-bonded intermediate, allowing disulfide bond transfer. FAD serves as cofactor.

It localises to the virion membrane. The protein resides in the host cytoplasm. It carries out the reaction 2 R'C(R)SH + O2 = R'C(R)S-S(R)CR' + H2O2. Functionally, FAD-dependent sulfhydryl oxidase that catalyzes disulfide bond formation. The complete pathway for formation of disulfide bonds in intracellular virion membrane proteins sequentially involves thiol-disulfide transfer between OPG072, OPG128 and OPG088. This is Probable FAD-linked sulfhydryl oxidase OPG072 (OPG072) from Monkeypox virus.